Reading from the N-terminus, the 554-residue chain is Dihydroxy-acid dehydratase (554 aa).

D78 is a binding site for Mg(2+). C119 provides a ligand contact to [2Fe-2S] cluster. Positions 120 and 121 each coordinate Mg(2+). K121 carries the N6-carboxylysine modification. C191 serves as a coordination point for [2Fe-2S] cluster. E444 contributes to the Mg(2+) binding site. S470 serves as the catalytic Proton acceptor.

The protein belongs to the IlvD/Edd family. Homodimer. [2Fe-2S] cluster is required as a cofactor. Requires Mg(2+) as cofactor.

It catalyses the reaction (2R)-2,3-dihydroxy-3-methylbutanoate = 3-methyl-2-oxobutanoate + H2O. The catalysed reaction is (2R,3R)-2,3-dihydroxy-3-methylpentanoate = (S)-3-methyl-2-oxopentanoate + H2O. It functions in the pathway amino-acid biosynthesis; L-isoleucine biosynthesis; L-isoleucine from 2-oxobutanoate: step 3/4. Its pathway is amino-acid biosynthesis; L-valine biosynthesis; L-valine from pyruvate: step 3/4. In terms of biological role, functions in the biosynthesis of branched-chain amino acids. Catalyzes the dehydration of (2R,3R)-2,3-dihydroxy-3-methylpentanoate (2,3-dihydroxy-3-methylvalerate) into 2-oxo-3-methylpentanoate (2-oxo-3-methylvalerate) and of (2R)-2,3-dihydroxy-3-methylbutanoate (2,3-dihydroxyisovalerate) into 2-oxo-3-methylbutanoate (2-oxoisovalerate), the penultimate precursor to L-isoleucine and L-valine, respectively. This chain is Dihydroxy-acid dehydratase, found in Nitratidesulfovibrio vulgaris (strain DP4) (Desulfovibrio vulgaris).